We begin with the raw amino-acid sequence, 271 residues long: 2-aminophenol 1,6-dioxygenase alpha subunit (271 aa).

Belongs to the LigB/MhpB extradiol dioxygenase family. In terms of assembly, heterotetramer of 2 alpha and 2 beta subunits.

In terms of biological role, component of the 2-aminophenol 1,6-dioxygenase complex that catalyzes the ring fission of 2-aminophenol to produce 2-aminomuconic 6-semialdehyde. AmnA seems to have a role in the stability of the complex. The chain is 2-aminophenol 1,6-dioxygenase alpha subunit (amnA) from Pseudomonas sp.